Reading from the N-terminus, the 462-residue chain is Bifunctional protein GlmU (462 aa).

The pyrophosphorylase stretch occupies residues 1 to 230; that stretch reads MVNKNAIILA…FEESMGVNDR (230 aa). Residues 9 to 12, Lys23, Gln73, 78 to 79, 101 to 103, Gly140, Glu155, Asn170, and Asn228 contribute to the UDP-N-acetyl-alpha-D-glucosamine site; these read LAAG, GT, and SGD. Asp103 lines the Mg(2+) pocket. Residue Asn228 participates in Mg(2+) binding. The segment at 231-251 is linker; it reads VALSQATKVMRQRINTAHMRN. The N-acetyltransferase stretch occupies residues 252–462; the sequence is GVTLIDPEST…LPVAKDEEWQ (211 aa). UDP-N-acetyl-alpha-D-glucosamine contacts are provided by Arg333 and Lys351. Residue His363 is the Proton acceptor of the active site. Tyr366 and Asn377 together coordinate UDP-N-acetyl-alpha-D-glucosamine. Acetyl-CoA contacts are provided by residues 386–387, Ser405, Ala423, and Arg440; that span reads NY.

In the N-terminal section; belongs to the N-acetylglucosamine-1-phosphate uridyltransferase family. The protein in the C-terminal section; belongs to the transferase hexapeptide repeat family. As to quaternary structure, homotrimer. It depends on Mg(2+) as a cofactor.

It localises to the cytoplasm. It carries out the reaction alpha-D-glucosamine 1-phosphate + acetyl-CoA = N-acetyl-alpha-D-glucosamine 1-phosphate + CoA + H(+). The enzyme catalyses N-acetyl-alpha-D-glucosamine 1-phosphate + UTP + H(+) = UDP-N-acetyl-alpha-D-glucosamine + diphosphate. The protein operates within nucleotide-sugar biosynthesis; UDP-N-acetyl-alpha-D-glucosamine biosynthesis; N-acetyl-alpha-D-glucosamine 1-phosphate from alpha-D-glucosamine 6-phosphate (route II): step 2/2. It functions in the pathway nucleotide-sugar biosynthesis; UDP-N-acetyl-alpha-D-glucosamine biosynthesis; UDP-N-acetyl-alpha-D-glucosamine from N-acetyl-alpha-D-glucosamine 1-phosphate: step 1/1. It participates in bacterial outer membrane biogenesis; LPS lipid A biosynthesis. Functionally, catalyzes the last two sequential reactions in the de novo biosynthetic pathway for UDP-N-acetylglucosamine (UDP-GlcNAc). The C-terminal domain catalyzes the transfer of acetyl group from acetyl coenzyme A to glucosamine-1-phosphate (GlcN-1-P) to produce N-acetylglucosamine-1-phosphate (GlcNAc-1-P), which is converted into UDP-GlcNAc by the transfer of uridine 5-monophosphate (from uridine 5-triphosphate), a reaction catalyzed by the N-terminal domain. This is Bifunctional protein GlmU from Latilactobacillus sakei subsp. sakei (strain 23K) (Lactobacillus sakei subsp. sakei).